The primary structure comprises 205 residues: Riboflavin kinase (205 aa).

Positions 1–24 (MRPDTSRDPVAGPDSGPEPPFPIR) are disordered. 2 residues coordinate Mg(2+): Thr-44 and Asn-46. Catalysis depends on Glu-104, which acts as the Nucleophile.

It belongs to the flavokinase family. Zn(2+) is required as a cofactor. It depends on Mg(2+) as a cofactor.

It catalyses the reaction riboflavin + ATP = FMN + ADP + H(+). It functions in the pathway cofactor biosynthesis; FMN biosynthesis; FMN from riboflavin (ATP route): step 1/1. Its function is as follows. Catalyzes the phosphorylation of riboflavin (vitamin B2) to form flavin mononucleotide (FMN) coenzyme. The sequence is that of Riboflavin kinase (fmn1) from Aspergillus terreus (strain NIH 2624 / FGSC A1156).